We begin with the raw amino-acid sequence, 326 residues long: Phosphate acyltransferase (326 aa).

It belongs to the PlsX family. As to quaternary structure, homodimer. Probably interacts with PlsY.

The protein resides in the cytoplasm. The catalysed reaction is a fatty acyl-[ACP] + phosphate = an acyl phosphate + holo-[ACP]. Its pathway is lipid metabolism; phospholipid metabolism. Catalyzes the reversible formation of acyl-phosphate (acyl-PO(4)) from acyl-[acyl-carrier-protein] (acyl-ACP). This enzyme utilizes acyl-ACP as fatty acyl donor, but not acyl-CoA. In Petrotoga mobilis (strain DSM 10674 / SJ95), this protein is Phosphate acyltransferase.